Consider the following 165-residue polypeptide: Xanthine-guanine phosphoribosyltransferase (165 aa).

5-phospho-alpha-D-ribose 1-diphosphate contacts are provided by residues 41–42 (RG) and 98–106 (DDLTDTGKT). Asp-99 serves as a coordination point for Mg(2+). The guanine site is built by Asp-102 and Ile-145. Xanthine is bound by residues Asp-102 and Ile-145. GMP contacts are provided by residues 102-106 (DTGKT) and 144-145 (WI).

The protein belongs to the purine/pyrimidine phosphoribosyltransferase family. XGPT subfamily. In terms of assembly, homotetramer. Mg(2+) is required as a cofactor.

It localises to the cell inner membrane. The catalysed reaction is GMP + diphosphate = guanine + 5-phospho-alpha-D-ribose 1-diphosphate. The enzyme catalyses XMP + diphosphate = xanthine + 5-phospho-alpha-D-ribose 1-diphosphate. It catalyses the reaction IMP + diphosphate = hypoxanthine + 5-phospho-alpha-D-ribose 1-diphosphate. Its pathway is purine metabolism; GMP biosynthesis via salvage pathway; GMP from guanine: step 1/1. It participates in purine metabolism; XMP biosynthesis via salvage pathway; XMP from xanthine: step 1/1. Purine salvage pathway enzyme that catalyzes the transfer of the ribosyl-5-phosphate group from 5-phospho-alpha-D-ribose 1-diphosphate (PRPP) to the N9 position of the 6-oxopurines guanine and xanthine to form the corresponding ribonucleotides GMP (guanosine 5'-monophosphate) and XMP (xanthosine 5'-monophosphate), with the release of PPi. To a lesser extent, also acts on hypoxanthine. The sequence is that of Xanthine-guanine phosphoribosyltransferase from Agrobacterium fabrum (strain C58 / ATCC 33970) (Agrobacterium tumefaciens (strain C58)).